Reading from the N-terminus, the 285-residue chain is Small ribosomal subunit protein uS2 (285 aa).

Positions glycine 231 to glutamate 285 are disordered. Residues alanine 255 to glutamate 285 show a composition bias toward low complexity.

Belongs to the universal ribosomal protein uS2 family.

In Micrococcus luteus (strain ATCC 4698 / DSM 20030 / JCM 1464 / CCM 169 / CCUG 5858 / IAM 1056 / NBRC 3333 / NCIMB 9278 / NCTC 2665 / VKM Ac-2230) (Micrococcus lysodeikticus), this protein is Small ribosomal subunit protein uS2.